Consider the following 440-residue polypeptide: Chromosomal replication initiator protein DnaA (440 aa).

Residues 1–74 form a domain I, interacts with DnaA modulators region; the sequence is MNPSQILENL…VQSGNKAIIN (74 aa). Positions 74–99 are domain II; it reads NIQAQSAKQSNKSTKIDIAHIKAQST. Positions 100 to 316 are domain III, AAA+ region; it reads ILNPSFTFDS…GIIISLNAYA (217 aa). Positions 146, 148, 149, and 150 each coordinate ATP. The segment at 317–440 is domain IV, binds dsDNA; it reads TILGQEITLE…KNKILVKSQS (124 aa).

The protein belongs to the DnaA family. Oligomerizes as a right-handed, spiral filament on DNA at oriC.

Its subcellular location is the cytoplasm. In terms of biological role, plays an essential role in the initiation and regulation of chromosomal replication. ATP-DnaA binds to the origin of replication (oriC) to initiate formation of the DNA replication initiation complex once per cell cycle. Binds the DnaA box (a 9 base pair repeat at the origin) and separates the double-stranded (ds)DNA. Forms a right-handed helical filament on oriC DNA; dsDNA binds to the exterior of the filament while single-stranded (ss)DNA is stabiized in the filament's interior. The ATP-DnaA-oriC complex binds and stabilizes one strand of the AT-rich DNA unwinding element (DUE), permitting loading of DNA polymerase. After initiation quickly degrades to an ADP-DnaA complex that is not apt for DNA replication. Binds acidic phospholipids. In Campylobacter jejuni (strain RM1221), this protein is Chromosomal replication initiator protein DnaA.